An 89-amino-acid chain; its full sequence is Small ribosomal subunit protein uS14 (89 aa).

This sequence belongs to the universal ribosomal protein uS14 family. As to quaternary structure, part of the 30S ribosomal subunit. Contacts proteins S3 and S10.

Binds 16S rRNA, required for the assembly of 30S particles and may also be responsible for determining the conformation of the 16S rRNA at the A site. The chain is Small ribosomal subunit protein uS14 from Oenococcus oeni (strain ATCC BAA-331 / PSU-1).